Consider the following 116-residue polypeptide: NADH-ubiquinone oxidoreductase chain 3 (116 aa).

The next 3 helical transmembrane spans lie at 3–23 (LVTT…TISF), 56–76 (FFLI…LLPL), and 84–104 (APTL…LGLI).

The protein belongs to the complex I subunit 3 family.

Its subcellular location is the mitochondrion membrane. It catalyses the reaction a ubiquinone + NADH + 5 H(+)(in) = a ubiquinol + NAD(+) + 4 H(+)(out). Functionally, core subunit of the mitochondrial membrane respiratory chain NADH dehydrogenase (Complex I) that is believed to belong to the minimal assembly required for catalysis. Complex I functions in the transfer of electrons from NADH to the respiratory chain. The immediate electron acceptor for the enzyme is believed to be ubiquinone. The sequence is that of NADH-ubiquinone oxidoreductase chain 3 (MT-ND3) from Oncorhynchus nerka (Sockeye salmon).